Here is an 82-residue protein sequence, read N- to C-terminus: uncharacterized protein (82 aa).

The tract at residues 22–82 (LRRSRSSRNG…WPPPCAFTPG (61 aa)) is disordered. Basic and acidic residues predominate over residues 47–58 (HRGEPGHPRMEE). A compositionally biased stretch (pro residues) spans 73-82 (WPPPCAFTPG).

This is an uncharacterized protein from Homo sapiens (Human).